Here is a 1260-residue protein sequence, read N- to C-terminus: UPF0507 protein LELG_01076 (1260 aa).

The 158-residue stretch at 336-493 (ADYDPSATKV…LSDNDKGLNT (158 aa)) folds into the VPS9 domain.

Belongs to the UPF0507 family.

The sequence is that of UPF0507 protein LELG_01076 from Lodderomyces elongisporus (strain ATCC 11503 / CBS 2605 / JCM 1781 / NBRC 1676 / NRRL YB-4239) (Yeast).